An 846-amino-acid chain; its full sequence is Protein arginine N-methyltransferase 9 (846 aa).

TPR repeat units follow at residues 25–58 (VARS…APEL), 67–100 (QYTL…FPDD), and 101–134 (EVIC…NPDF). 2 SAM-dependent MTase PRMT-type domains span residues 137–466 (AKEN…YLRI) and 530–846 (NIPY…AVKP).

The protein belongs to the class I-like SAM-binding methyltransferase superfamily. Protein arginine N-methyltransferase family. Found in a complex with PRMT9, SF3B2 and SF3B4. Interacts with SF3B2.

The protein resides in the cytoplasm. It carries out the reaction L-arginyl-[protein] + 2 S-adenosyl-L-methionine = N(omega),N(omega)'-dimethyl-L-arginyl-[protein] + 2 S-adenosyl-L-homocysteine + 2 H(+). Its function is as follows. Arginine methyltransferase that can both catalyze the formation of omega-N monomethylarginine (MMA) and symmetrical dimethylarginine (sDMA). Specifically mediates the symmetrical dimethylation of SF3B2. Involved in the regulation of alternative splicing of pre-mRNA. The protein is Protein arginine N-methyltransferase 9 (Prmt9) of Mus musculus (Mouse).